A 229-amino-acid chain; its full sequence is Cytidylate kinase (229 aa).

10 to 18 contacts ATP; it reads GFSSCGKST.

The protein belongs to the cytidylate kinase family. Type 1 subfamily.

The protein resides in the cytoplasm. It carries out the reaction CMP + ATP = CDP + ADP. It catalyses the reaction dCMP + ATP = dCDP + ADP. The sequence is that of Cytidylate kinase from Bacteroides fragilis (strain ATCC 25285 / DSM 2151 / CCUG 4856 / JCM 11019 / LMG 10263 / NCTC 9343 / Onslow / VPI 2553 / EN-2).